The primary structure comprises 177 residues: Antigen TyF1 (177 aa).

The protein belongs to the Dps family. As to quaternary structure, homodecamer.

This is Antigen TyF1 from Treponema pallidum subsp. pertenue (Yaws treponeme).